The following is a 102-amino-acid chain: Acid shock protein (102 aa).

A signal peptide spans Met-1–Ala-21. Residues Ala-22–Lys-41 show a composition bias toward low complexity. Positions Ala-22–Gln-58 are excised as a propeptide. The interval Ala-22–Ala-102 is disordered. Positions Ala-80 to His-90 are enriched in basic residues. A compositionally biased stretch (low complexity) spans Gln-91–Ala-102.

It belongs to the Asr family. Post-translationally, proteolytic processing gives rise to the active protein.

The protein localises to the periplasm. Required for growth and/or survival at acidic conditions. In Escherichia coli O157:H7, this protein is Acid shock protein (asr).